A 278-amino-acid polypeptide reads, in one-letter code: Casein kinase II subunit beta (278 aa).

Disordered regions lie at residues 1 to 22 and 78 to 111; these read MSQE…DSGA and DEEE…RNKS. Residue serine 2 is modified to N-acetylserine. Phosphoserine is present on serine 2. Positions 78 to 94 are enriched in acidic residues; sequence DEEEDEDDVVEEDEVDQ.

This sequence belongs to the casein kinase 2 subunit beta family. As to quaternary structure, tetramer composed of an alpha subunit, an alpha' subunit, one beta subunit and one beta' subunit. Interacts with FACT subunits POB3 and SPT16. interacts with YTA7. Phosphorylated by alpha subunit.

Functionally, regulatory subunit of casein kinase II/CK2. As part of the kinase complex regulates the basal catalytic activity of the alpha subunit a constitutively active serine/threonine-protein kinase that phosphorylates a large number of substrates containing acidic residues C-terminal to the phosphorylated serine or threonine. The sequence is that of Casein kinase II subunit beta (CKB1) from Saccharomyces cerevisiae (strain ATCC 204508 / S288c) (Baker's yeast).